Consider the following 328-residue polypeptide: Phenylalanine--tRNA ligase alpha subunit (328 aa).

Glutamate 245 is a Mg(2+) binding site.

Belongs to the class-II aminoacyl-tRNA synthetase family. Phe-tRNA synthetase alpha subunit type 1 subfamily. Tetramer of two alpha and two beta subunits. It depends on Mg(2+) as a cofactor.

The protein localises to the cytoplasm. It catalyses the reaction tRNA(Phe) + L-phenylalanine + ATP = L-phenylalanyl-tRNA(Phe) + AMP + diphosphate + H(+). The chain is Phenylalanine--tRNA ligase alpha subunit from Helicobacter pylori (strain Shi470).